Consider the following 270-residue polypeptide: MSDLHNESIFITGGGSGLGLALVERFIEEGAQVATLELSAAKVASLRQRFGEHILAVEGNVTCYADYQRAVDQILTRSGKLDCFIGNAGIWDHNASLVNTPAETLETGFHELFNVNVLGYLLGAKACAPALIASEGSMIFTLSNAARYPGGGGPLYTASKHAATGLIRQLAYELAPKVRVNGVGPCGMASDLRGPQALGQSETSIMQSLTPEKIAAILPLQFFPQPADFTGPYVMLASRRNNRALSGVMINADAGLAIRGIRHVAAGLDL.

An NAD(+)-binding site is contributed by 10 to 34 (FITGGGSGLGLALVERFIEEGAQVA). Residue serine 143 participates in substrate binding. Residue tyrosine 156 is the Proton acceptor of the active site.

It belongs to the short-chain dehydrogenases/reductases (SDR) family.

The enzyme catalyses 3-(cis-5,6-dihydroxycyclohexa-1,3-dien-1-yl)propanoate + NAD(+) = 3-(2,3-dihydroxyphenyl)propanoate + NADH + H(+). It catalyses the reaction (2E)-3-(cis-5,6-dihydroxycyclohexa-1,3-dien-1-yl)prop-2-enoate + NAD(+) = (2E)-3-(2,3-dihydroxyphenyl)prop-2-enoate + NADH + H(+). It functions in the pathway aromatic compound metabolism; 3-phenylpropanoate degradation. Functionally, converts 3-phenylpropionate-dihydrodiol (PP-dihydrodiol) and cinnamic acid-dihydrodiol (CI-dihydrodiol) into 3-(2,3-dihydroxylphenyl)propanoic acid (DHPP) and 2,3-dihydroxicinnamic acid (DHCI), respectively. In Shigella sonnei (strain Ss046), this protein is 3-phenylpropionate-dihydrodiol/cinnamic acid-dihydrodiol dehydrogenase.